We begin with the raw amino-acid sequence, 476 residues long: MTEVETTHMNAGTESQQEPAELAEKQKAIGNAFYKEKKYAEAIKAYTEAIDLGSDSALAIYYSNRAATYMQIGEFELALCDAKQSDRIKPDVPKTQSRIRQAYEGLSILNEAEVYLKNKQAGLALNALDRLQRRIDSTTQPPMSWMYLKAQVYIFQNDMDRAQKIAHDVLRLNPKNVEALVLRGKVMYYSGENAKAITHFQEALKLDPDCTTAKTLFKQVRKLENTKNQGNDLFRQGNYQDAYEKYSEALQIDPDNKETVAKLYMNRATVLLRLKRPEEALSDSDNALAIDSSYLKGLKVRAKAHEALEKWEEAVRDVQSAIELDASDANLRQELRRLQLELKKSKRKDHYKILGVSKEATDIEIKKAYRKLALVYHPDKNAGNLEAEARFKEVGEAYTILSDPESRRRFDSGVDLEPGMEGGAGMDPFDILRAYQAGGSFPGGGFPGGGFPGGSYNSQGFGMGGGFPGFTSFQFS.

The disordered stretch occupies residues 1–22; it reads MTEVETTHMNAGTESQQEPAEL. The segment covering 7 to 18 has biased composition (polar residues); it reads THMNAGTESQQE. TPR repeat units lie at residues 23-56, 59-92, 143-176, 177-210, 223-256, 261-294, and 295-328; these read AEKQ…GSDS, AIYY…KPDV, MSWM…NPKN, VEAL…DPDC, LENT…DPDN, AKLY…DSSY, and LKGL…DASD. A J domain is found at 349-414; it reads DHYKILGVSK…ESRRRFDSGV (66 aa).

It localises to the cytoplasm. This chain is DnaJ homolog subfamily C member 7 homolog, found in Schizosaccharomyces pombe (strain 972 / ATCC 24843) (Fission yeast).